A 241-amino-acid chain; its full sequence is Glutamate/aspartate import ATP-binding protein GltL (241 aa).

The ABC transporter domain maps to 2–236 (ITLKNVSKWY…PKSDRAKDFL (235 aa)). 34–41 (GPSGSGKS) lines the ATP pocket.

The protein belongs to the ABC transporter superfamily. The complex is composed of two ATP-binding proteins (GltL), two transmembrane proteins (GltJ and GltK) and a solute-binding protein (GltI).

Its subcellular location is the cell inner membrane. The enzyme catalyses a polar amino acid(out) + ATP + H2O = a polar amino acid(in) + ADP + phosphate + H(+). It carries out the reaction L-glutamate(out) + ATP + H2O = L-glutamate(in) + ADP + phosphate + H(+). The catalysed reaction is L-aspartate(out) + ATP + H2O = L-aspartate(in) + ADP + phosphate + H(+). Functionally, part of the ABC transporter complex GltIJKL involved in glutamate and aspartate uptake. Probably responsible for energy coupling to the transport system. The sequence is that of Glutamate/aspartate import ATP-binding protein GltL (gltL) from Escherichia coli O157:H7.